Reading from the N-terminus, the 220-residue chain is uncharacterized protein (220 aa).

A run of 7 helical transmembrane segments spans residues 6–26 (FSIL…LIVW), 33–53 (IVRL…LRGI), 59–79 (ALIA…PWLL), 103–123 (LLIT…VVNL), 126–146 (GVTI…LFVM), 157–177 (AGFL…TAGV), and 179–199 (LIVE…IGVL).

The protein resides in the cell membrane. This is an uncharacterized protein from Mycobacterium tuberculosis (strain ATCC 25618 / H37Rv).